The primary structure comprises 427 residues: Piwi protein (427 aa).

The mid domain stretch occupies residues 38 to 167 (PYEVPSLKYN…VQFVSKLGGK (130 aa)). The Piwi domain maps to 110 to 406 (GIMLVLPEYN…VAGIIANVNR (297 aa)). Residues 118 to 124 (YNTPLYY) form a binds 5'-phosphorylated end of guide DNA region. The segment at 147–148 (RN) is binds target DNA. The tract at residues 150-155 (TFYVDN) is binds guide DNA. Q159 and L427 together coordinate a divalent metal cation. A PIWI domain region spans residues 168 to 427 (PWILNVDPEK…RSLQTNPWFL (260 aa)).

This sequence belongs to the argonaute family. Short pAgo subfamily. As to quaternary structure, homodimer probably stabilized by DNA. Each subunit is capable of interacting with a DNA molecule. It depends on a divalent metal cation as a cofactor.

Its function is as follows. Might play a role in defense against invading genetic elements, using short nucleic acid sequences as guides to bind complementary target strands, resulting in slicing of the target nucleic acid. Binds nucleic acids with decreasing affinity in the following order; ssDNA, ssRNA, dsDNA, RNA-DNA, RNA-RNA. Association of the 5' seed region of the guide strand (nucleotides 2-7) with AfPiwi increases affinity for the corresponding target strand; the greatest increase in affinity is for guide DNA with target RNA. The chain is Piwi protein from Archaeoglobus fulgidus (strain ATCC 49558 / DSM 4304 / JCM 9628 / NBRC 100126 / VC-16).